Reading from the N-terminus, the 33-residue chain is Cytochrome b6-f complex subunit 8 (33 aa).

A helical transmembrane segment spans residues Leu-2–Val-22.

It belongs to the PetN family. The 4 large subunits of the cytochrome b6-f complex are cytochrome b6, subunit IV (17 kDa polypeptide, PetD), cytochrome f and the Rieske protein, while the 4 small subunits are PetG, PetL, PetM and PetN. The complex functions as a dimer.

The protein resides in the cellular thylakoid membrane. Component of the cytochrome b6-f complex, which mediates electron transfer between photosystem II (PSII) and photosystem I (PSI), cyclic electron flow around PSI, and state transitions. In Prochlorococcus marinus (strain MIT 9303), this protein is Cytochrome b6-f complex subunit 8.